The sequence spans 372 residues: Spermidine/putrescine import ATP-binding protein PotA (372 aa).

The region spanning 13 to 243 (IKLTGISKSF…PKNLFVARFI (231 aa)) is the ABC transporter domain. ATP is bound at residue 45-52 (GPSGCGKT).

It belongs to the ABC transporter superfamily. Spermidine/putrescine importer (TC 3.A.1.11.1) family. In terms of assembly, the complex is composed of two ATP-binding proteins (PotA), two transmembrane proteins (PotB and PotC) and a solute-binding protein (PotD).

Its subcellular location is the cell inner membrane. The catalysed reaction is ATP + H2O + polyamine-[polyamine-binding protein]Side 1 = ADP + phosphate + polyamineSide 2 + [polyamine-binding protein]Side 1.. In terms of biological role, part of the ABC transporter complex PotABCD involved in spermidine/putrescine import. Responsible for energy coupling to the transport system. This Aliivibrio fischeri (strain ATCC 700601 / ES114) (Vibrio fischeri) protein is Spermidine/putrescine import ATP-binding protein PotA.